The following is a 254-amino-acid chain: MLHQFSRNELAIGKEGLETLKNSTVAVLGVGGVGSFAAEALARSGVGRILLVDKDDVDITNVNRQLHALLSTVGQPKVDLMKARIADINPECEVIALKMFYTEETYEQFFDYGLDYVIDASDTICYKIHLMKECLKRDIPLISSMGAANKTDPTRFQIADISKTHTDPIAKVVRTKLRKEGIKKGVQVIFSDESPIVIREDVRKEVGNDEAKIRKAKMPPSSNAFVPSVAGLIMGGHVVMDLLKDIEIKRVKDK.

This sequence belongs to the HesA/MoeB/ThiF family.

Functionally, catalyzes the ATP-dependent dehydration of threonylcarbamoyladenosine at position 37 (t(6)A37) to form cyclic t(6)A37 (ct(6)A37) in tRNAs that read codons beginning with adenine. This is tRNA threonylcarbamoyladenosine dehydratase (tcdA) from Bacillus subtilis (strain 168).